Here is a 96-residue protein sequence, read N- to C-terminus: Small ribosomal subunit protein bS6 (96 aa).

Belongs to the bacterial ribosomal protein bS6 family.

Functionally, binds together with bS18 to 16S ribosomal RNA. This is Small ribosomal subunit protein bS6 from Carboxydothermus hydrogenoformans (strain ATCC BAA-161 / DSM 6008 / Z-2901).